An 81-amino-acid polypeptide reads, in one-letter code: Mu/omega-theraphotoxin-Hs1a (81 aa).

The first 21 residues, 1–21, serve as a signal peptide directing secretion; the sequence is MRASMFLALAGLVLLFVVCYA. A propeptide spanning residues 22-48 is cleaved from the precursor; that stretch reads SESEEKEFPRELLFKFFAVDDFKGEER. Cystine bridges form between Cys50/Cys65, Cys57/Cys70, and Cys64/Cys77.

Belongs to the neurotoxin 10 (Hwtx-1) family. 23 (HwTx-I) subfamily. In terms of tissue distribution, expressed by the venom gland.

It is found in the secreted. In terms of biological role, lethal toxin with multiple biological activities. Inhibits voltage-gated TTX-sensitive sodium channels in DRG neurons (IC(50)=55 nM) and also shows activity when directly tested on Nav1.7/SCN9A (IC(50)=25.1-630 nM). Inhibits N-type calcium channels (Cav2.2/CACNA1B (IC(50)=100 nM)). Also blocks neuromuscular transmission. In vivo, intrathecal injected toxin shows analgesic activity in the rat formalin-induced pain model, without induction of motor dysfunction in rats. The polypeptide is Mu/omega-theraphotoxin-Hs1a (Cyriopagopus schmidti (Chinese bird spider)).